A 781-amino-acid polypeptide reads, in one-letter code: Protein argonaute (781 aa).

The PAZ domain occupies 110 to 194 (SMNELLTERR…RHNDYCNSVM (85 aa)). In terms of domain architecture, Piwi spans 436 to 760 (LVVIVIPGPK…LSKFCGEVLR (325 aa)).

Belongs to the argonaute family. Ago subfamily. As to quaternary structure, interacts with miR2. Highly specific binding to the mRNA m7G-cap. May be a component of the RNA-induced silencing complex (RISC), a sequence-specific, multicomponent nuclease that destroys or silences messenger RNAs homologous to the silencing trigger.

The protein resides in the cytoplasm. Its function is as follows. Plays an essential role in growth and, with Dicer, also involved in microRNA (miRNA)-mediated translational repression. The RNA interference pathway is implicated in antigenic variation having a role in regulation of variant-specific surface protein (VSP)-coding gene expression. Several VSP genes are transcribed but only transcripts encoding the VSP to be expressed accumulate. Antisense RNAs corresponding to the silenced VSP genes are detected. In Giardia intestinalis (Giardia lamblia), this protein is Protein argonaute.